A 207-amino-acid chain; its full sequence is Protein TEX261 homolog (207 aa).

Transmembrane regions (helical) follow at residues 2–22 (FLSLLILLSYALGFVFCVVCL), 54–74 (IIFLLGIFEDLDFTSLLFSFI), 94–114 (YKFILSVLSFIISHISWFIYF), and 126–146 (IIAIFTFCVWLIPLIFFISLA).

The protein belongs to the SVP26 family.

The protein localises to the membrane. The polypeptide is Protein TEX261 homolog (Dictyostelium discoideum (Social amoeba)).